Here is a 354-residue protein sequence, read N- to C-terminus: Uroporphyrinogen decarboxylase (354 aa).

Residues Arg-28–Arg-32, Asp-78, Tyr-155, Ser-210, and His-325 each bind substrate.

It belongs to the uroporphyrinogen decarboxylase family. As to quaternary structure, homodimer.

The protein localises to the cytoplasm. It carries out the reaction uroporphyrinogen III + 4 H(+) = coproporphyrinogen III + 4 CO2. It functions in the pathway porphyrin-containing compound metabolism; protoporphyrin-IX biosynthesis; coproporphyrinogen-III from 5-aminolevulinate: step 4/4. In terms of biological role, catalyzes the decarboxylation of four acetate groups of uroporphyrinogen-III to yield coproporphyrinogen-III. This Trichodesmium erythraeum (strain IMS101) protein is Uroporphyrinogen decarboxylase.